We begin with the raw amino-acid sequence, 146 residues long: Ataxin-7-like protein 1 (146 aa).

Disordered regions lie at residues 1 to 27 and 125 to 146; these read MTSERSRIPCLSAAAAEGTGKKQQEGT and KRNASISWSGAESRQALEQRQV. Residues 127–138 show a composition bias toward polar residues; that stretch reads NASISWSGAESR.

The chain is Ataxin-7-like protein 1 (Atxn7l1) from Mus musculus (Mouse).